The chain runs to 386 residues: Cytochrome b (386 aa).

4 helical membrane-spanning segments follow: residues 39 to 59, 83 to 104, 119 to 139, and 184 to 204; these read FGSL…FLAM, FMLK…YIHM, WNIG…GYVL, and FFSL…LHIL. Heme b contacts are provided by H89 and H103. The heme b site is built by H188 and H202. H207 lines the a ubiquinone pocket. Transmembrane regions (helical) follow at residues 232 to 252, 294 to 314, 326 to 346, and 353 to 374; these read YKDL…CYFM, LGGV…PFIH, LGKI…WLGA, and YIMI…LVPL.

This sequence belongs to the cytochrome b family. As to quaternary structure, the main subunits of complex b-c1 are: cytochrome b, cytochrome c1 and the Rieske protein. It depends on heme b as a cofactor.

Its subcellular location is the mitochondrion inner membrane. In terms of biological role, component of the ubiquinol-cytochrome c reductase complex (complex III or cytochrome b-c1 complex) that is part of the mitochondrial respiratory chain. The b-c1 complex mediates electron transfer from ubiquinol to cytochrome c. Contributes to the generation of a proton gradient across the mitochondrial membrane that is then used for ATP synthesis. The sequence is that of Cytochrome b (MT-CYB) from Sarcophyton glaucum (Toadstool umbrella leather coral).